The chain runs to 66 residues: Hirudin-PA (66 aa).

Residues 1-3 (ITY) are interaction with thrombin active site. 3 disulfide bridges follow: C6-C14, C16-C28, and C22-C39. Positions 39-66 (CVTGEGTPKPQSHNQGDFEPIPEDAYDE) are disordered. O-linked (GalNAc...) threonine glycosylation occurs at T45. The tract at residues 55–66 (DFEPIPEDAYDE) is interaction with fibrinogen-binding exosite of thrombin. Y64 carries the post-translational modification Sulfotyrosine.

This sequence belongs to the protease inhibitor I14 (hirudin) family.

It localises to the secreted. Functionally, hirudin is a potent thrombin-specific protease inhibitor. It forms a stable non-covalent complex with alpha-thrombin, thereby abolishing its ability to cleave fibrinogen. This Hirudo medicinalis (Medicinal leech) protein is Hirudin-PA.